Reading from the N-terminus, the 306-residue chain is Probable histidinol-phosphatase (306 aa).

The protein belongs to the PHP hydrolase family. HisK subfamily.

It catalyses the reaction L-histidinol phosphate + H2O = L-histidinol + phosphate. It participates in amino-acid biosynthesis; L-histidine biosynthesis; L-histidine from 5-phospho-alpha-D-ribose 1-diphosphate: step 8/9. The polypeptide is Probable histidinol-phosphatase (Schizosaccharomyces pombe (strain 972 / ATCC 24843) (Fission yeast)).